The following is a 207-amino-acid chain: Hemin/hemoglobin-binding protein 1 (207 aa).

The N-terminal stretch at 1–27 (MKKVLVFAAFIVLFSFSFLSTGLTAQA) is a signal peptide. In terms of domain architecture, NEAT spans 29–148 (LKDGTYSVDY…RFDEGSAKAL (120 aa)). Residues 151-178 (AVKSSDNNTTTPATKSDSSNKVTNPKSS) are disordered. Residues 154–178 (SSDNNTTTPATKSDSSNKVTNPKSS) show a composition bias toward polar residues. The short motif at 174-178 (NPKSS) is the NPKXZ sorting signal element. Serine 177 carries the post-translational modification Murein peptidoglycan amidated serine. Residues 178–207 (SDSSQMFLYGIIFVATGAGLILLKRRAIFK) constitute a propeptide, removed by sortase B.

The protein resides in the secreted. It is found in the cell wall. Functionally, binds both host hemin and hemoglobin with affinity in the nanomolar range and presumably directs it to membrane transporters. This chain is Hemin/hemoglobin-binding protein 1, found in Listeria monocytogenes serovar 1/2a (strain ATCC BAA-679 / EGD-e).